A 92-amino-acid chain; its full sequence is Large ribosomal subunit protein eL31 (92 aa).

The protein belongs to the eukaryotic ribosomal protein eL31 family.

This chain is Large ribosomal subunit protein eL31, found in Haloquadratum walsbyi (strain DSM 16790 / HBSQ001).